Reading from the N-terminus, the 126-residue chain is Prostate and testis expressed protein 1 (126 aa).

The signal sequence occupies residues 1–21; the sequence is MDKSLLLELPILLCCFRALSG. The region spanning 46 to 125 is the UPAR/Ly6 domain; that stretch reads VQCRMCHLQF…CRSHDLCNED (80 aa). Disulfide bonds link cysteine 48-cysteine 75, cysteine 51-cysteine 60, cysteine 67-cysteine 94, and cysteine 98-cysteine 115.

This sequence belongs to the PATE family. In terms of tissue distribution, expressed specifically in prostate cancer, normal prostate, and testis. Expressed in the epithelial cells of the prostate cancer and normal prostate tissues.

The protein resides in the secreted. The chain is Prostate and testis expressed protein 1 (PATE1) from Homo sapiens (Human).